The chain runs to 47 residues: MNVSFKILGYEIASIEFDFGEDDERELTPLDKGRKALSRWWVRGMVK.

In Mycobacterium phage L5 (Mycobacteriophage L5), this protein is Gene 60 protein (60).